Consider the following 119-residue polypeptide: Large ribosomal subunit protein bL20 (119 aa).

Belongs to the bacterial ribosomal protein bL20 family.

Binds directly to 23S ribosomal RNA and is necessary for the in vitro assembly process of the 50S ribosomal subunit. It is not involved in the protein synthesizing functions of that subunit. This chain is Large ribosomal subunit protein bL20, found in Mycoplasma capricolum subsp. capricolum (strain California kid / ATCC 27343 / NCTC 10154).